The chain runs to 231 residues: Ribose-5-phosphate isomerase A (231 aa).

Substrate-binding positions include 28 to 31, 83 to 86, and 96 to 99; these read TGST, DGAD, and KGGG. The active-site Proton acceptor is the E105. Residue K123 coordinates substrate.

The protein belongs to the ribose 5-phosphate isomerase family. In terms of assembly, homodimer.

The enzyme catalyses aldehydo-D-ribose 5-phosphate = D-ribulose 5-phosphate. The protein operates within carbohydrate degradation; pentose phosphate pathway; D-ribose 5-phosphate from D-ribulose 5-phosphate (non-oxidative stage): step 1/1. In terms of biological role, catalyzes the reversible conversion of ribose-5-phosphate to ribulose 5-phosphate. The protein is Ribose-5-phosphate isomerase A of Sinorhizobium medicae (strain WSM419) (Ensifer medicae).